The sequence spans 701 residues: MNNVLTTEIAGRELKVEFGKVGMLSNAATFTSYGDTVILTNVNASEQPREGIDFFPLSVEYEERLYAVGKIPGGFIKREGRPSEKAILNGRAVDRTLRPLFPKGYRNDVQVVTTVVSVEKDNLPEILAINAASLALCLSSIPYTIPAAAVQVGIIDGKFVTNPDTQGREKSILHLTVCATKERVMMIEAGGQEIPEDTMIDAIKYGFDECQKIIAFQEEAVAKFGKKKDEPVLYAVDPELEKDVKEFASDMIKEAMYIMEKDERNAAVDAVYEKVNEAFGEKYADKMGDIKEVLYTMQKKVVRHMLLKDKRRPDGRAFDQIRPLGCEIGILPRTHGTGLFTRGLTQVMTVATLGSISEIQILDGIDEAQSKRYMHHYNFPGYSVGEVKPLRGPGRREIGHGALAERALEPLIPSEEEFPYTIRLVSEVLSSNGSTSQASVCGSTLALLDAGVPIKRPAAGIAMGLITSEDLSEEAVLTDIQGIEDFFGDMDFKVAGTTEGITSIQVDTKLQGFSFNVVENAIRDARKARLTIIDKINECISTPKEDVSLYAPKTQIMSINPDKIRDVIGAGGKVINKIIQDTGVKIDIKEDGTVFVSSTDHNGVNEAIKIIEGLTKEVKAGEVYLGKVTKITTFGAFVEILPSKEGLVHISKLAKERVNKVEDVVSIGDEILVKVTEIDNQGRINLSRKDALVEQENKEEK.

Asp-485 and Asp-491 together coordinate Mg(2+). The region spanning Pro-552–Ile-611 is the KH domain. The S1 motif domain maps to Gly-621–Lys-689.

The protein belongs to the polyribonucleotide nucleotidyltransferase family. Requires Mg(2+) as cofactor.

Its subcellular location is the cytoplasm. It carries out the reaction RNA(n+1) + phosphate = RNA(n) + a ribonucleoside 5'-diphosphate. Functionally, involved in mRNA degradation. Catalyzes the phosphorolysis of single-stranded polyribonucleotides processively in the 3'- to 5'-direction. This Clostridium beijerinckii (strain ATCC 51743 / NCIMB 8052) (Clostridium acetobutylicum) protein is Polyribonucleotide nucleotidyltransferase.